A 283-amino-acid chain; its full sequence is Splicing factor U2af small subunit B (283 aa).

The C3H1-type 1 zinc finger occupies 12 to 40 (EKDRVNCPFYFKIGACRHGDRCSRLHNRP). The RRM domain maps to 44–146 (PTLLLSNMYQ…RPIIADFSPV (103 aa)). Residues 148-175 (DFREATCRQYEENSCNRGGYCNFMHVKQ) form a C3H1-type 2 zinc finger. Residues 191–210 (SYRRGSRSRSRSISPRRKRE) show a composition bias toward basic residues. Residues 191 to 283 (SYRRGSRSRS…QWNRERDEGV (93 aa)) are disordered. The span at 211–245 (HSRERERGDVRDRDRHGNGKRSSDRSERHDRDGGG) shows a compositional bias: basic and acidic residues. Residues 246-259 (RRRHGSPKRSRSPR) show a composition bias toward basic residues. Residues 260 to 283 (NVREGSEERRARIEQWNRERDEGV) show a composition bias toward basic and acidic residues.

It belongs to the splicing factor SR family. Component of the spliceosome. Homo- and heterodimer. Interacts with RNU1, U2AF35A and SR45.

It localises to the nucleus speckle. Necessary for the splicing of pre-mRNA. Probably active at the 3' splice sites. This chain is Splicing factor U2af small subunit B (U2AF35B), found in Arabidopsis thaliana (Mouse-ear cress).